A 1770-amino-acid chain; its full sequence is AF4/FMR2 family member lilli (1770 aa).

3 stretches are compositionally biased toward low complexity: residues 1 to 19 (MAQQ…HPHQ), 154 to 204 (LGHS…YLKQ), and 227 to 269 (PSSS…GTTP). Disordered regions lie at residues 1–28 (MAQQ…NQLQ), 134–327 (SRHA…EKDI), 402–660 (TSLL…PGNV), 761–805 (LHSA…LQLP), 822–1173 (MQKA…KQGQ), and 1291–1390 (KHEH…QISK). Over residues 402 to 414 (TSLLTTPPHASQG) the composition is skewed to polar residues. Over residues 434–447 (KAAAALSPTAAAKP) the composition is skewed to low complexity. Over residues 448-461 (LKTEKNHTLEKQDS) the composition is skewed to basic and acidic residues. Acidic residues predominate over residues 463-474 (LENDLELSESED). 2 positions are modified to phosphoserine: serine 470 and serine 472. Residues 483-503 (SAGNSSNSSESDSSESGSESS) show a composition bias toward low complexity. Basic residues predominate over residues 511 to 520 (QHHHHNHHHQ). Residues 521–552 (QQQQQLQQQQQQQLLQQKQQHQQILQQQQRQL) are compositionally biased toward low complexity. Residues 582 to 614 (FGSGGAGNGGCSTASSGGGGGGSGSGGGSGSSS) are compositionally biased toward gly residues. The span at 615–625 (GIGTMSSGSSS) shows a compositional bias: low complexity. Composition is skewed to polar residues over residues 626-638 (NKTP…NKWT) and 647-659 (ANQT…SPGN). Over residues 768–800 (SDSGTSGSGSTSSSSSSSDSAPGEVVPMPGPGE) the composition is skewed to low complexity. Residues 844–854 (QRQKKPRKKKP) show a composition bias toward basic residues. Phosphoserine occurs at positions 863 and 864. 5 stretches are compositionally biased toward low complexity: residues 880–893 (AAAA…ATAT), 909–928 (QQQS…SSSQ), 994–1028 (ANAS…SSSS), 1071–1081 (SGSSSPSSSSS), and 1111–1131 (SQHS…SSTS). Positions 900 to 912 (KKGRGRPRKQQQS) form a DNA-binding region, a.T hook. A phosphoserine mark is found at serine 920 and serine 922. 2 stretches are compositionally biased toward basic and acidic residues: residues 1295 to 1312 (PHPV…ESKF) and 1321 to 1355 (FQLK…EREQ). Serine 1442 is subject to Phosphoserine. 2 stretches are compositionally biased toward low complexity: residues 1483 to 1499 (AAAT…TSTA) and 1656 to 1676 (GNTP…SGSN). 2 disordered regions span residues 1483–1502 (AAAT…APPA) and 1656–1683 (GNTP…GKIV).

Belongs to the AF4 family.

Its subcellular location is the nucleus. Functionally, has a role in transcriptional regulation. Acts in parallel with the Ras/MAPK and the PI3K/PKB pathways in the control of cell identity and cellular growth. Essential for regulation of the cytoskeleton and cell growth but not for cell proliferation or growth rate. Required specifically for the microtubule-based basal transport of lipid droplets. Plays a partially redundant function downstream of Raf in cell fate specification in the developing eye. Pair-rule protein that regulates embryonic cellularization, gastrulation and segmentation. The polypeptide is AF4/FMR2 family member lilli (Drosophila pseudoobscura pseudoobscura (Fruit fly)).